A 291-amino-acid polypeptide reads, in one-letter code: 5'-3' exonuclease (291 aa).

The 5'-3' exonuclease domain maps to Thr176–Lys269.

5'-3' exonuclease acting preferentially on double-stranded DNA. This is 5'-3' exonuclease (polA) from Mycoplasma pneumoniae (strain ATCC 29342 / M129 / Subtype 1) (Mycoplasmoides pneumoniae).